Consider the following 565-residue polypeptide: Sensor histidine kinase MtrB (565 aa).

Positions 1–13 (MMWGSRRRTRSRW) are enriched in basic residues. Residues 1 to 21 (MMWGSRRRTRSRWGRSGPMTR) form a disordered region. 2 helical membrane passes run 42–62 (VVAL…FVLT) and 213–233 (GTMI…ALLV). The region spanning 235–287 (RQVVVPVRSASRIAERFAEGHLSERMPVRGEDDMARLAMSFNDMAESLSRQIT) is the HAMP domain. Positions 302–519 (DVSHELRTPL…CFRLTLPLVR (218 aa)) constitute a Histidine kinase domain. At H305 the chain carries Phosphohistidine; by autocatalysis. Residues 524-565 (TTSPLPMKPIPQPSPSGGQSPSTGPQHAKDRARQREHAERSL) are disordered. Residues 538 to 549 (PSGGQSPSTGPQ) show a composition bias toward low complexity. Positions 550–565 (HAKDRARQREHAERSL) are enriched in basic and acidic residues.

The protein localises to the cell membrane. The catalysed reaction is ATP + protein L-histidine = ADP + protein N-phospho-L-histidine.. Functionally, member of the two-component regulatory system MtrA/MtrB. Seems to function as a membrane-associated protein kinase that phosphorylates MtrA in response to environmental signals. This is Sensor histidine kinase MtrB (mtrB) from Mycolicibacterium paratuberculosis (strain ATCC BAA-968 / K-10) (Mycobacterium paratuberculosis).